The following is a 1711-amino-acid chain: Receptor-type tyrosine-protein phosphatase V (1711 aa).

The signal sequence occupies residues 1–17; it reads MRPLILLAALLWLQGFL. At 18-1074 the chain is on the extracellular side; it reads AEDDACSSLE…SEPRASISLA (1057 aa). Fibronectin type-III domains are found at residues 37 to 129, 130 to 222, 218 to 305, 306 to 391, 393 to 470, 475 to 569, 565 to 654, 655 to 749, 744 to 831, and 832 to 926; these read PLLS…TAPT, VVRG…VPPD, PVPP…EWTY, PSYP…LAES, ALPR…ISGY, PPQS…APPT, PAPP…TGWT, PPSA…IPNE, PLIP…VLSV, and EPGP…SAEA. Asn-42, Asn-74, Asn-89, Asn-117, Asn-174, Asn-239, and Asn-259 each carry an N-linked (GlcNAc...) asparagine glycan. An N-linked (GlcNAc...) asparagine glycan is attached at Asn-431. Residues Asn-570, Asn-620, Asn-649, Asn-663, and Asn-737 are each glycosylated (N-linked (GlcNAc...) asparagine). N-linked (GlcNAc...) asparagine glycosylation is found at Asn-851, Asn-882, Asn-970, and Asn-982. Residues 1075–1095 form a helical membrane-spanning segment; sequence IIPLTVMLGAVVGSIVIVCAV. The Cytoplasmic portion of the chain corresponds to 1096–1711; that stretch reads LCLLRWRCLK…PRAGKWPAPC (616 aa). Tyrosine-protein phosphatase domains follow at residues 1150–1409 and 1427–1696; these read FFQE…LLNK and DFAQ…LNSA. Substrate contacts are provided by residues Asp-1316, 1350–1356, and Gln-1394; that span reads CSAGVGR. Cys-1350 functions as the Phosphocysteine intermediate in the catalytic mechanism.

Belongs to the protein-tyrosine phosphatase family. Receptor class 3 subfamily. The cytoplasmic domain contains potential phosphorylation sites. In terms of tissue distribution, bone and testis. In the latter, restricted to the basal portion of the seminiferous tubule.

Its subcellular location is the membrane. It carries out the reaction O-phospho-L-tyrosyl-[protein] + H2O = L-tyrosyl-[protein] + phosphate. In terms of biological role, protein tyrosine phosphatase that acts as a regulator of energy metabolism. Prevents decarboxylation of osteocalcin (Bglap) via an indirect mechanism, preventing the hormone activity of osteocalcin. Functions in signaling pathways during bone remodeling, as well as serve a broader role in cell interactions associated with differentiation in bone and testis. Associated with differentiation in bone and testis. This chain is Receptor-type tyrosine-protein phosphatase V (Ptprv), found in Rattus norvegicus (Rat).